A 304-amino-acid chain; its full sequence is MPVQQHGLLVLDKPSGPSSAQCISKVKRLGQKKIGHAGTLDPMAGGVLLVLLGHATKISGHLMADGEKVYAGTLRLGETTDTWDAEGTVTATAPWHHVTEADVRAIVDSWLGSSEQEVPPYSAAKHQGQPLYKLSRAGRETPVKTKTVEISLAEVVWCDLPHVRFRVRCSSGTYIRSLAHSLGIRLGCGAVLTELTREYSHPFGLDMAHTLDAVLAEPGRLAERVIPITHALPHWPKVGISLQQEASVRNGIPLPYQPEMVADMPFMEGVKAILLDTREVPVALVETAIVGGRQVWAVLRGLWS.

Asp-41 (nucleophile) is an active-site residue.

Belongs to the pseudouridine synthase TruB family. Type 1 subfamily.

The enzyme catalyses uridine(55) in tRNA = pseudouridine(55) in tRNA. Functionally, responsible for synthesis of pseudouridine from uracil-55 in the psi GC loop of transfer RNAs. The sequence is that of tRNA pseudouridine synthase B from Nitratidesulfovibrio vulgaris (strain ATCC 29579 / DSM 644 / CCUG 34227 / NCIMB 8303 / VKM B-1760 / Hildenborough) (Desulfovibrio vulgaris).